We begin with the raw amino-acid sequence, 469 residues long: Squamosa promoter-binding-like protein 3 (469 aa).

A disordered region spans residues 96–118 (SAEEHDKNMDKGKSKVDDTGTSR). Over residues 97–115 (AEEHDKNMDKGKSKVDDTG) the composition is skewed to basic and acidic residues. The SBP-type zinc finger occupies 179–256 (NPHCQVEGCN…HDHNARRRKP (78 aa)). Zn(2+)-binding residues include Cys-182, Cys-187, Cys-204, His-207, Cys-223, Cys-226, His-230, and Cys-242. A Bipartite nuclear localization signal motif is present at residues 239-255 (KRSCRRRLHDHNARRRK). Residues 446-469 (NDDDEDHLQLPKPSYDNSHYDQMN) are disordered. The span at 460–469 (YDNSHYDQMN) shows a compositional bias: polar residues.

Ubiquitous.

The protein resides in the nucleus. Functionally, trans-acting factor that binds specifically to the consensus nucleotide sequence 5'-TNCGTACAA-3'. May be involved in panicle development. The protein is Squamosa promoter-binding-like protein 3 (SPL3) of Oryza sativa subsp. indica (Rice).